Here is a 395-residue protein sequence, read N- to C-terminus: Bifunctional enzyme IspD/IspF (395 aa).

Residues 1–237 form a 2-C-methyl-D-erythritol 4-phosphate cytidylyltransferase region; sequence MRTWVLLLAA…DANEPQVTVP (237 aa). The interval 238 to 395 is 2-C-methyl-D-erythritol 2,4-cyclodiphosphate synthase; it reads CVGWGYDVHR…AAVTGLRPMP (158 aa). Residues Asp-244 and His-246 each coordinate a divalent metal cation. 4-CDP-2-C-methyl-D-erythritol 2-phosphate contacts are provided by residues 244 to 246 and 270 to 271; these read DVH and HS. His-278 is an a divalent metal cation binding site. Residues 292-294, 297-301, 368-371, and Phe-375 each bind 4-CDP-2-C-methyl-D-erythritol 2-phosphate; these read DIG, FPDSD, and TTEE.

It in the N-terminal section; belongs to the IspD/TarI cytidylyltransferase family. IspD subfamily. In the C-terminal section; belongs to the IspF family. A divalent metal cation serves as cofactor.

The catalysed reaction is 2-C-methyl-D-erythritol 4-phosphate + CTP + H(+) = 4-CDP-2-C-methyl-D-erythritol + diphosphate. It catalyses the reaction 4-CDP-2-C-methyl-D-erythritol 2-phosphate = 2-C-methyl-D-erythritol 2,4-cyclic diphosphate + CMP. It functions in the pathway isoprenoid biosynthesis; isopentenyl diphosphate biosynthesis via DXP pathway; isopentenyl diphosphate from 1-deoxy-D-xylulose 5-phosphate: step 2/6. Its pathway is isoprenoid biosynthesis; isopentenyl diphosphate biosynthesis via DXP pathway; isopentenyl diphosphate from 1-deoxy-D-xylulose 5-phosphate: step 4/6. In terms of biological role, bifunctional enzyme that catalyzes the formation of 4-diphosphocytidyl-2-C-methyl-D-erythritol from CTP and 2-C-methyl-D-erythritol 4-phosphate (MEP) (IspD), and catalyzes the conversion of 4-diphosphocytidyl-2-C-methyl-D-erythritol 2-phosphate (CDP-ME2P) to 2-C-methyl-D-erythritol 2,4-cyclodiphosphate (ME-CPP) with a corresponding release of cytidine 5-monophosphate (CMP) (IspF). This chain is Bifunctional enzyme IspD/IspF, found in Nitratidesulfovibrio vulgaris (strain ATCC 29579 / DSM 644 / CCUG 34227 / NCIMB 8303 / VKM B-1760 / Hildenborough) (Desulfovibrio vulgaris).